Here is a 471-residue protein sequence, read N- to C-terminus: Cytochrome b-c1 complex subunit 1, mitochondrial (471 aa).

The protein belongs to the peptidase M16 family.

It localises to the mitochondrion matrix. The chain is Cytochrome b-c1 complex subunit 1, mitochondrial (ucr-1) from Caenorhabditis elegans.